Here is an 884-residue protein sequence, read N- to C-terminus: Chitin synthase E (884 aa).

Disordered stretches follow at residues 1–58 (MGTP…PAVS) and 73–108 (AVFA…SRAG). 2 stretches are compositionally biased toward polar residues: residues 37–48 (QSLLERNNSSHY) and 84–93 (EAASENTFRA). Asn-44 carries an N-linked (GlcNAc...) asparagine glycan. The segment covering 95–105 (SNGDKASREGS) has biased composition (basic and acidic residues). Residue Asn-301 is glycosylated (N-linked (GlcNAc...) asparagine). 7 consecutive transmembrane segments (helical) span residues 513-532 (WLNG…GRIY), 556-576 (IMTW…MDLV), 597-617 (IVNN…FIMA), 635-655 (YFSL…VGAF), 681-701 (GGIV…ASVL), 708-728 (IITS…ILMV), and 812-832 (VLVC…TATG). Asn-840 carries an N-linked (GlcNAc...) asparagine glycan. The chain crosses the membrane as a helical span at residues 852–872 (VILWITAGLSLFRFIGSLWFL).

The protein belongs to the chitin synthase family. Class III subfamily.

The protein localises to the cell membrane. The enzyme catalyses [(1-&gt;4)-N-acetyl-beta-D-glucosaminyl](n) + UDP-N-acetyl-alpha-D-glucosamine = [(1-&gt;4)-N-acetyl-beta-D-glucosaminyl](n+1) + UDP + H(+). In terms of biological role, polymerizes chitin, a structural polymer of the cell wall and septum, by transferring the sugar moiety of UDP-GlcNAc to the non-reducing end of the growing chitin polymer. Plays an important role in septal growth or maintenance. Mediates colony spore formation. ChsE and chsD seem to play a functionally redundant role in lateral cell wall chitin synthesis. Involved in resistance to echinocandins. The protein is Chitin synthase E of Aspergillus niger (strain ATCC MYA-4892 / CBS 513.88 / FGSC A1513).